A 178-amino-acid chain; its full sequence is Large ribosomal subunit protein uL6 (178 aa).

The protein belongs to the universal ribosomal protein uL6 family. Part of the 50S ribosomal subunit.

Its function is as follows. This protein binds to the 23S rRNA, and is important in its secondary structure. It is located near the subunit interface in the base of the L7/L12 stalk, and near the tRNA binding site of the peptidyltransferase center. The polypeptide is Large ribosomal subunit protein uL6 (Streptococcus gordonii (strain Challis / ATCC 35105 / BCRC 15272 / CH1 / DL1 / V288)).